The sequence spans 270 residues: Acyl-[acyl-carrier-protein]--UDP-N-acetylglucosamine O-acyltransferase (270 aa).

Residues 69-72, H121, H140, and Q157 contribute to the substrate site; that span reads QDLK.

The protein belongs to the transferase hexapeptide repeat family. LpxA subfamily. As to quaternary structure, homotrimer.

Its subcellular location is the cytoplasm. It catalyses the reaction a (3R)-hydroxyacyl-[ACP] + UDP-N-acetyl-alpha-D-glucosamine = a UDP-3-O-[(3R)-3-hydroxyacyl]-N-acetyl-alpha-D-glucosamine + holo-[ACP]. It functions in the pathway glycolipid biosynthesis; lipid IV(A) biosynthesis; lipid IV(A) from (3R)-3-hydroxytetradecanoyl-[acyl-carrier-protein] and UDP-N-acetyl-alpha-D-glucosamine: step 1/6. Involved in the biosynthesis of lipid A, a phosphorylated glycolipid that anchors the lipopolysaccharide to the outer membrane of the cell. This Helicobacter pylori (strain ATCC 700392 / 26695) (Campylobacter pylori) protein is Acyl-[acyl-carrier-protein]--UDP-N-acetylglucosamine O-acyltransferase.